We begin with the raw amino-acid sequence, 469 residues long: Glutamate--tRNA ligase (469 aa).

The short motif at 11 to 21 (PSPTGFIHLGN) is the 'HIGH' region element. Residues 114–131 (QREAGEKPRYDGTWRPEP) show a composition bias toward basic and acidic residues. The tract at residues 114-139 (QREAGEKPRYDGTWRPEPGKVLPEPP) is disordered. Positions 243–247 (KMSKR) match the 'KMSKS' region motif. ATP is bound at residue K246.

This sequence belongs to the class-I aminoacyl-tRNA synthetase family. Glutamate--tRNA ligase type 1 subfamily. In terms of assembly, monomer.

It is found in the cytoplasm. It carries out the reaction tRNA(Glu) + L-glutamate + ATP = L-glutamyl-tRNA(Glu) + AMP + diphosphate. Functionally, catalyzes the attachment of glutamate to tRNA(Glu) in a two-step reaction: glutamate is first activated by ATP to form Glu-AMP and then transferred to the acceptor end of tRNA(Glu). The protein is Glutamate--tRNA ligase of Paraburkholderia xenovorans (strain LB400).